The chain runs to 113 residues: uncharacterized protein (113 aa).

This sequence belongs to the ycf68 family.

The protein localises to the plastid. It localises to the chloroplast. This is an uncharacterized protein from Eucalyptus globulus subsp. globulus (Tasmanian blue gum).